The chain runs to 570 residues: Dual specificity testis-specific protein kinase 2 (570 aa).

Residues 58–313 form the Protein kinase domain; it reads DFTREKIGSG…EIGKTLKEIM (256 aa). ATP is bound by residues 64 to 72 and lysine 87; that span reads IGSGFFSEV. Residue aspartate 176 is the Proton acceptor of the active site. A Phosphoserine; by autocatalysis modification is found at serine 219. Residues 316–327 show a composition bias toward basic and acidic residues; it reads LPEEELERDRKL. Residues 316-357 are disordered; that stretch reads LPEEELERDRKLQPTAKGPLEKVPGGKRLSSLDDKIPHKSPR. Phosphoserine occurs at positions 369, 456, and 460. The tract at residues 511–530 is disordered; the sequence is AMDCSNPQEENGFGPRLKGT.

This sequence belongs to the protein kinase superfamily. TKL Ser/Thr protein kinase family. The cofactor is Mg(2+). It depends on Mn(2+) as a cofactor.

It localises to the nucleus. It carries out the reaction L-seryl-[protein] + ATP = O-phospho-L-seryl-[protein] + ADP + H(+). The catalysed reaction is L-threonyl-[protein] + ATP = O-phospho-L-threonyl-[protein] + ADP + H(+). The enzyme catalyses L-tyrosyl-[protein] + ATP = O-phospho-L-tyrosyl-[protein] + ADP + H(+). Activated by autophosphorylation on Ser-219. Dual specificity protein kinase activity catalyzing autophosphorylation and phosphorylation of exogenous substrates on both serine/threonine and tyrosine residues. Phosphorylates cofilin at 'Ser-3'. May play an important role in spermatogenesis. The protein is Dual specificity testis-specific protein kinase 2 (Tesk2) of Mus musculus (Mouse).